The primary structure comprises 642 residues: Threonine--tRNA ligase (642 aa).

Residues 1 to 63 (MSTVTVTLPD…TADVELEIVT (63 aa)) enclose the TGS domain. Residues 242–533 (DHRKIGQEMD…LTEHYNGKFP (292 aa)) form a catalytic region. 3 residues coordinate Zn(2+): Cys-334, His-385, and His-510.

The protein belongs to the class-II aminoacyl-tRNA synthetase family. In terms of assembly, homodimer. Zn(2+) serves as cofactor.

It is found in the cytoplasm. It carries out the reaction tRNA(Thr) + L-threonine + ATP = L-threonyl-tRNA(Thr) + AMP + diphosphate + H(+). Functionally, catalyzes the attachment of threonine to tRNA(Thr) in a two-step reaction: L-threonine is first activated by ATP to form Thr-AMP and then transferred to the acceptor end of tRNA(Thr). This Haloarcula marismortui (strain ATCC 43049 / DSM 3752 / JCM 8966 / VKM B-1809) (Halobacterium marismortui) protein is Threonine--tRNA ligase.